The chain runs to 431 residues: Keratin, type I cytoskeletal 40 (431 aa).

The tract at residues M1–E89 is head. In terms of domain architecture, IF rod spans E89–L400. Residues K90–Q124 are coil 1A. The tract at residues C125 to D135 is linker 1. Residues Y136–E236 are coil 1B. Residues Q237 to V252 are linker 12. A coil 2 region spans residues D253–E396. The tail stretch occupies residues D397–A431.

This sequence belongs to the intermediate filament family. Heterotetramer of two type I and two type II keratins.

May play a role in late hair differentiation. The chain is Keratin, type I cytoskeletal 40 (Krt40) from Rattus norvegicus (Rat).